A 243-amino-acid polypeptide reads, in one-letter code: Small ribosomal subunit protein mS23 (243 aa).

The protein belongs to the mitochondrion-specific ribosomal protein mS23 family. In terms of assembly, component of the mitochondrial small ribosomal subunit.

It is found in the mitochondrion. The chain is Small ribosomal subunit protein mS23 (rsm25) from Emericella nidulans (strain FGSC A4 / ATCC 38163 / CBS 112.46 / NRRL 194 / M139) (Aspergillus nidulans).